Reading from the N-terminus, the 516-residue chain is Exodeoxyribonuclease 7 large subunit (516 aa).

It belongs to the XseA family. As to quaternary structure, heterooligomer composed of large and small subunits.

The protein resides in the cytoplasm. The catalysed reaction is Exonucleolytic cleavage in either 5'- to 3'- or 3'- to 5'-direction to yield nucleoside 5'-phosphates.. Its function is as follows. Bidirectionally degrades single-stranded DNA into large acid-insoluble oligonucleotides, which are then degraded further into small acid-soluble oligonucleotides. The protein is Exodeoxyribonuclease 7 large subunit of Chlamydia trachomatis serovar A (strain ATCC VR-571B / DSM 19440 / HAR-13).